The following is a 485-amino-acid chain: Aspartyl/glutamyl-tRNA(Asn/Gln) amidotransferase subunit B (485 aa).

The protein belongs to the GatB/GatE family. GatB subfamily. As to quaternary structure, heterotrimer of A, B and C subunits.

The enzyme catalyses L-glutamyl-tRNA(Gln) + L-glutamine + ATP + H2O = L-glutaminyl-tRNA(Gln) + L-glutamate + ADP + phosphate + H(+). The catalysed reaction is L-aspartyl-tRNA(Asn) + L-glutamine + ATP + H2O = L-asparaginyl-tRNA(Asn) + L-glutamate + ADP + phosphate + 2 H(+). Functionally, allows the formation of correctly charged Asn-tRNA(Asn) or Gln-tRNA(Gln) through the transamidation of misacylated Asp-tRNA(Asn) or Glu-tRNA(Gln) in organisms which lack either or both of asparaginyl-tRNA or glutaminyl-tRNA synthetases. The reaction takes place in the presence of glutamine and ATP through an activated phospho-Asp-tRNA(Asn) or phospho-Glu-tRNA(Gln). The chain is Aspartyl/glutamyl-tRNA(Asn/Gln) amidotransferase subunit B from Cupriavidus taiwanensis (strain DSM 17343 / BCRC 17206 / CCUG 44338 / CIP 107171 / LMG 19424 / R1) (Ralstonia taiwanensis (strain LMG 19424)).